We begin with the raw amino-acid sequence, 886 residues long: Alanine--tRNA ligase (886 aa).

Zn(2+) contacts are provided by histidine 564, histidine 568, cysteine 666, and histidine 670.

It belongs to the class-II aminoacyl-tRNA synthetase family. Requires Zn(2+) as cofactor.

Its subcellular location is the cytoplasm. It catalyses the reaction tRNA(Ala) + L-alanine + ATP = L-alanyl-tRNA(Ala) + AMP + diphosphate. Its function is as follows. Catalyzes the attachment of alanine to tRNA(Ala) in a two-step reaction: alanine is first activated by ATP to form Ala-AMP and then transferred to the acceptor end of tRNA(Ala). Also edits incorrectly charged Ser-tRNA(Ala) and Gly-tRNA(Ala) via its editing domain. The sequence is that of Alanine--tRNA ligase from Prochlorococcus marinus (strain MIT 9301).